We begin with the raw amino-acid sequence, 432 residues long: Asparagine--tRNA ligase (432 aa).

Belongs to the class-II aminoacyl-tRNA synthetase family. In terms of assembly, homodimer.

The protein resides in the cytoplasm. The enzyme catalyses tRNA(Asn) + L-asparagine + ATP = L-asparaginyl-tRNA(Asn) + AMP + diphosphate + H(+). This is Asparagine--tRNA ligase from Lactobacillus delbrueckii subsp. bulgaricus (strain ATCC 11842 / DSM 20081 / BCRC 10696 / JCM 1002 / NBRC 13953 / NCIMB 11778 / NCTC 12712 / WDCM 00102 / Lb 14).